Consider the following 306-residue polypeptide: MAEIPIDFPPLKIQEKIATILDTFTELSAELSAELSAELSAELSAELSAELSAELSAELSAELSAELSAELSAELSAELSAELSAELRERRKQYAFYRDYLLNQENIRKIYGANIPFETFQIRDICEINRGREINEKYLRENPGEFPVYSSATTNGGLIGKINDYDFHGEYVTWTTGGAHAGNVFYRNEKFSCSQNCGLLEVKNKNKFSSKFLCFALKLQSKKFVNYASAIPVLTIKRIAEIELSFPPLEIQEKIADILFAFEKLCNDLTEGIPAEIELRKKQLDYYQNFLFNWVQNKKLESLKSL.

The protein belongs to the type-I restriction system S methylase family. The methyltransferase is composed of M and S polypeptides.

Its function is as follows. The specificity (S) subunit of a type I methyltransferase (MTase); this subunit dictates DNA sequence specificity. The single R subunit has multiple frameshifts and is probably not expressed. The protein is Putative type I specificity subunit S.MpnORF285P of Mycoplasma pneumoniae (strain ATCC 29342 / M129 / Subtype 1) (Mycoplasmoides pneumoniae).